The sequence spans 246 residues: UDP-N-acetyl-D-mannosaminuronic acid transferase (246 aa).

It belongs to the glycosyltransferase 26 family.

It catalyses the reaction UDP-N-acetyl-alpha-D-mannosaminouronate + N-acetyl-alpha-D-glucosaminyl-di-trans,octa-cis-undecaprenyl diphosphate = beta-D-ManNAcA-(1-&gt;4)-alpha-D-GlcNAc-di-trans,octa-cis-undecaprenyl diphosphate + UDP + H(+). The protein operates within bacterial outer membrane biogenesis; enterobacterial common antigen biosynthesis. Its function is as follows. Catalyzes the synthesis of Und-PP-GlcNAc-ManNAcA (Lipid II), the second lipid-linked intermediate involved in enterobacterial common antigen (ECA) synthesis. This Citrobacter koseri (strain ATCC BAA-895 / CDC 4225-83 / SGSC4696) protein is UDP-N-acetyl-D-mannosaminuronic acid transferase.